Consider the following 369-residue polypeptide: Probable dual-specificity RNA methyltransferase RlmN (369 aa).

Glu-108 serves as the catalytic Proton acceptor. The 244-residue stretch at 114-357 folds into the Radical SAM core domain; sequence YPDRATVCIS…CTVRDTRGQE (244 aa). Cys-121 and Cys-362 are oxidised to a cystine. [4Fe-4S] cluster is bound by residues Cys-128, Cys-132, and Cys-135. S-adenosyl-L-methionine contacts are provided by residues 183 to 184, Ser-217, 240 to 242, and Asn-319; these read GE and SLH. Cys-362 serves as the catalytic S-methylcysteine intermediate.

This sequence belongs to the radical SAM superfamily. RlmN family. The cofactor is [4Fe-4S] cluster.

Its subcellular location is the cytoplasm. It catalyses the reaction adenosine(2503) in 23S rRNA + 2 reduced [2Fe-2S]-[ferredoxin] + 2 S-adenosyl-L-methionine = 2-methyladenosine(2503) in 23S rRNA + 5'-deoxyadenosine + L-methionine + 2 oxidized [2Fe-2S]-[ferredoxin] + S-adenosyl-L-homocysteine. It carries out the reaction adenosine(37) in tRNA + 2 reduced [2Fe-2S]-[ferredoxin] + 2 S-adenosyl-L-methionine = 2-methyladenosine(37) in tRNA + 5'-deoxyadenosine + L-methionine + 2 oxidized [2Fe-2S]-[ferredoxin] + S-adenosyl-L-homocysteine. Specifically methylates position 2 of adenine 2503 in 23S rRNA and position 2 of adenine 37 in tRNAs. This Saccharopolyspora erythraea (strain ATCC 11635 / DSM 40517 / JCM 4748 / NBRC 13426 / NCIMB 8594 / NRRL 2338) protein is Probable dual-specificity RNA methyltransferase RlmN.